The chain runs to 375 residues: Queuine tRNA-ribosyltransferase (375 aa).

Catalysis depends on aspartate 89, which acts as the Proton acceptor. Residues 89 to 93, aspartate 143, glutamine 187, and glycine 214 each bind substrate; that span reads DSGGF. The tract at residues 245–251 is RNA binding; sequence GVGKPED. Aspartate 264 acts as the Nucleophile in catalysis. An RNA binding; important for wobble base 34 recognition region spans residues 269–273; that stretch reads TRNAR. The Zn(2+) site is built by cysteine 302, cysteine 304, cysteine 307, and histidine 333.

This sequence belongs to the queuine tRNA-ribosyltransferase family. In terms of assembly, homodimer. Within each dimer, one monomer is responsible for RNA recognition and catalysis, while the other monomer binds to the replacement base PreQ1. The cofactor is Zn(2+).

The enzyme catalyses 7-aminomethyl-7-carbaguanine + guanosine(34) in tRNA = 7-aminomethyl-7-carbaguanosine(34) in tRNA + guanine. It participates in tRNA modification; tRNA-queuosine biosynthesis. Functionally, catalyzes the base-exchange of a guanine (G) residue with the queuine precursor 7-aminomethyl-7-deazaguanine (PreQ1) at position 34 (anticodon wobble position) in tRNAs with GU(N) anticodons (tRNA-Asp, -Asn, -His and -Tyr). Catalysis occurs through a double-displacement mechanism. The nucleophile active site attacks the C1' of nucleotide 34 to detach the guanine base from the RNA, forming a covalent enzyme-RNA intermediate. The proton acceptor active site deprotonates the incoming PreQ1, allowing a nucleophilic attack on the C1' of the ribose to form the product. After dissociation, two additional enzymatic reactions on the tRNA convert PreQ1 to queuine (Q), resulting in the hypermodified nucleoside queuosine (7-(((4,5-cis-dihydroxy-2-cyclopenten-1-yl)amino)methyl)-7-deazaguanosine). In Salmonella agona (strain SL483), this protein is Queuine tRNA-ribosyltransferase.